We begin with the raw amino-acid sequence, 323 residues long: Ribonuclease Z (323 aa).

Residues H62, H64, D66, H67, H140, D211, and H270 each contribute to the Zn(2+) site. D66 functions as the Proton acceptor in the catalytic mechanism.

This sequence belongs to the RNase Z family. As to quaternary structure, homodimer. It depends on Zn(2+) as a cofactor.

It carries out the reaction Endonucleolytic cleavage of RNA, removing extra 3' nucleotides from tRNA precursor, generating 3' termini of tRNAs. A 3'-hydroxy group is left at the tRNA terminus and a 5'-phosphoryl group is left at the trailer molecule.. Functionally, zinc phosphodiesterase, which displays some tRNA 3'-processing endonuclease activity. Probably involved in tRNA maturation, by removing a 3'-trailer from precursor tRNA. The protein is Ribonuclease Z of Marinobacter nauticus (strain ATCC 700491 / DSM 11845 / VT8) (Marinobacter aquaeolei).